Reading from the N-terminus, the 346-residue chain is UDP-3-O-acylglucosamine N-acyltransferase (346 aa).

His-253 (proton acceptor) is an active-site residue.

This sequence belongs to the transferase hexapeptide repeat family. LpxD subfamily. In terms of assembly, homotrimer.

It catalyses the reaction a UDP-3-O-[(3R)-3-hydroxyacyl]-alpha-D-glucosamine + a (3R)-hydroxyacyl-[ACP] = a UDP-2-N,3-O-bis[(3R)-3-hydroxyacyl]-alpha-D-glucosamine + holo-[ACP] + H(+). The protein operates within bacterial outer membrane biogenesis; LPS lipid A biosynthesis. Catalyzes the N-acylation of UDP-3-O-acylglucosamine using 3-hydroxyacyl-ACP as the acyl donor. Is involved in the biosynthesis of lipid A, a phosphorylated glycolipid that anchors the lipopolysaccharide to the outer membrane of the cell. The protein is UDP-3-O-acylglucosamine N-acyltransferase of Rickettsia conorii (strain ATCC VR-613 / Malish 7).